Consider the following 441-residue polypeptide: Synaptotagmin-1 (441 aa).

Residues 1-69 are Vesicular-facing; the sequence is MVKLDFSSQD…DVVKEKVMQQ (69 aa). Residues 70 to 96 form a helical membrane-spanning segment; the sequence is TGMPEWAFVFLGFVFILLVLACAFCLI. The Cytoplasmic segment spans residues 97-441; it reads RKLFGKKRHG…EEGDKKDDKK (345 aa). C2 domains are found at residues 159 to 278 and 292 to 425; these read KLGR…EEWK and SLGD…AQWH. Ca(2+) contacts are provided by aspartate 190, aspartate 196, aspartate 248, phenylalanine 249, aspartate 250, serine 253, lysine 254, aspartate 256, aspartate 323, aspartate 329, aspartate 383, aspartate 385, and aspartate 391.

The protein belongs to the synaptotagmin family. Ca(2+) serves as cofactor. Localized to regions known to be rich in synapses and appears to be associated with synaptic vesicles. Also found in some non-neuronal secretory structures.

The protein localises to the cytoplasmic vesicle. Its subcellular location is the secretory vesicle. It is found in the synaptic vesicle membrane. The protein resides in the synapse. May have a regulatory role in the membrane interactions during trafficking of synaptic vesicles at the active zone of the synapse. It binds acidic phospholipids with a specificity that requires the presence of both an acidic head group and a diacyl backbone. Involved in necrotic cell death. This Caenorhabditis elegans protein is Synaptotagmin-1 (snt-1).